We begin with the raw amino-acid sequence, 248 residues long: Probable transcriptional regulatory protein Mrad2831_3553 (248 aa).

It belongs to the TACO1 family.

The protein resides in the cytoplasm. This Methylobacterium radiotolerans (strain ATCC 27329 / DSM 1819 / JCM 2831 / NBRC 15690 / NCIMB 10815 / 0-1) protein is Probable transcriptional regulatory protein Mrad2831_3553.